The following is a 466-amino-acid chain: Rho GTPase-activating protein 1 (466 aa).

Disordered regions lie at residues 1-31 (MTEV…SLSY) and 65-84 (EEQD…DDGG). A compositionally biased stretch (low complexity) spans 8 to 31 (PSSPSASHSSSSSSSSPSPSSLSY). Residues 65–74 (EEQDLRRRSS) show a composition bias toward basic and acidic residues. A CRIB domain is found at 117 to 130 (IGWPTNVRHVAHVT). The Rho-GAP domain maps to 162 to 342 (VSTESMQLSY…TLIEKTLRER (181 aa)). The tract at residues 354–402 (PLEPSDESGHQSPSQSLAFNTSEQSEETQSDNIENAENQSSSSEISDEL) is disordered. Composition is skewed to polar residues over residues 363–376 (HQSP…NTSE) and 383–397 (SDNI…SSSE).

Functionally, acts as a GTPase activator for the Rac-type GTPase by converting it to an inactive GDP-bound state. This chain is Rho GTPase-activating protein 1 (ROPGAP1), found in Arabidopsis thaliana (Mouse-ear cress).